The primary structure comprises 561 residues: GPI mannosyltransferase 3 (561 aa).

8 helical membrane passes run 3–25 (LIYVFLLILAVRLASVFVVQTYY), 64–84 (IAGLYKILALLQLDSAHLLVV), 110–130 (WALFLILVPWFWFYTGSRTLA), 155–175 (LWPAAICCFLRPTAAVIWLPL), 195–215 (FVLIGLLVAGLGIAIDTYWHG), 246–266 (FSVGLPTVLGINTLPFIFGVM), 275–295 (YPVSKQLLITIFLTLVVLSAV), and 328–348 (TMLWTTALVILVGNVMPAWYL). N-linked (GlcNAc...) asparagine glycans are attached at residues Asn398 and Asn456. A disordered region spans residues 525–546 (ENAFNRGPDSGQHEPDVHDHPP). Residues 535–546 (GQHEPDVHDHPP) show a composition bias toward basic and acidic residues.

This sequence belongs to the glycosyltransferase 22 family. PIGB subfamily.

The protein localises to the endoplasmic reticulum membrane. The protein operates within glycolipid biosynthesis; glycosylphosphatidylinositol-anchor biosynthesis. In terms of biological role, mannosyltransferase involved in glycosylphosphatidylinositol-anchor biosynthesis. Transfers the third alpha-1,2-mannose to Man2-GlcN-acyl-PI during GPI precursor assembly. This chain is GPI mannosyltransferase 3, found in Drosophila melanogaster (Fruit fly).